Here is a 256-residue protein sequence, read N- to C-terminus: Small ribosomal subunit protein eS1 (256 aa).

The segment covering 1-18 has biased composition (basic residues); that stretch reads MAVGKNKRLSKGKKGVKK. Residues 1–21 are disordered; sequence MAVGKNKRLSKGKKGVKKRTV. Residue alanine 2 is modified to N-acetylalanine; partial.

The protein belongs to the eukaryotic ribosomal protein eS1 family. As to quaternary structure, component of the small ribosomal subunit. Mature ribosomes consist of a small (40S) and a large (60S) subunit. The 40S subunit contains about 33 different proteins and 1 molecule of RNA (18S). The 60S subunit contains about 49 different proteins and 3 molecules of RNA (25S, 5.8S and 5S).

It localises to the cytoplasm. The sequence is that of Small ribosomal subunit protein eS1 (rps1) from Neosartorya fischeri (strain ATCC 1020 / DSM 3700 / CBS 544.65 / FGSC A1164 / JCM 1740 / NRRL 181 / WB 181) (Aspergillus fischerianus).